The primary structure comprises 390 residues: Phosphopentomutase (390 aa).

Mn(2+) contacts are provided by D9, D283, H288, D324, H325, and H336.

It belongs to the phosphopentomutase family. Requires Mn(2+) as cofactor.

It localises to the cytoplasm. It catalyses the reaction 2-deoxy-alpha-D-ribose 1-phosphate = 2-deoxy-D-ribose 5-phosphate. The catalysed reaction is alpha-D-ribose 1-phosphate = D-ribose 5-phosphate. The protein operates within carbohydrate degradation; 2-deoxy-D-ribose 1-phosphate degradation; D-glyceraldehyde 3-phosphate and acetaldehyde from 2-deoxy-alpha-D-ribose 1-phosphate: step 1/2. In terms of biological role, isomerase that catalyzes the conversion of deoxy-ribose 1-phosphate (dRib-1-P) and ribose 1-phosphate (Rib-1-P) to deoxy-ribose 5-phosphate (dRib-5-P) and ribose 5-phosphate (Rib-5-P), respectively. This Thermotoga petrophila (strain ATCC BAA-488 / DSM 13995 / JCM 10881 / RKU-1) protein is Phosphopentomutase.